Reading from the N-terminus, the 570-residue chain is Formate--tetrahydrofolate ligase (570 aa).

65–72 (TPFGEGKT) lines the ATP pocket.

This sequence belongs to the formate--tetrahydrofolate ligase family.

The catalysed reaction is (6S)-5,6,7,8-tetrahydrofolate + formate + ATP = (6R)-10-formyltetrahydrofolate + ADP + phosphate. It participates in one-carbon metabolism; tetrahydrofolate interconversion. The protein is Formate--tetrahydrofolate ligase of Shewanella halifaxensis (strain HAW-EB4).